A 720-amino-acid polypeptide reads, in one-letter code: DNA replication licensing factor mcm7-B (720 aa).

The C4-type zinc finger occupies C183–C210. The region spanning F331–T537 is the MCM domain. Residues Y344, G383, A385, K386, S387, N488, R513, and R603 each contribute to the ATP site. Residues S512–D515 carry the Arginine finger motif.

The protein belongs to the MCM family. As to quaternary structure, component of the mcm2-7 complex (RLF-M). The complex forms a toroidal hexameric ring with the proposed subunit order mcm2-mcm6-mcm4-mcm7-mcm3-mcm5. The heterodimer of mmcm3/mcm5 interacts with mcm4, mmcm6, mcm7 and weakly with mcm2. The N-terminus is required for interaction with mmcm3, though this interaction may not be direct, and remains in a complex with mmcm3 throughout the cell cycle. Begins to associate with zmcm6 at the neurula stage. Component of the replisome complex. Component of the CMG helicase complex, composed of the mcm2-7 complex, the GINS complex and cdc45. In terms of processing, ubiquitinated by traip when forks converge following formation of DNA interstrand cross-links. Short ubiquitin chains on mcm7 promote recruitment of DNA glycosylase neil3. If the interstrand cross-link cannot be cleaved by neil3, the ubiquitin chains continue to grow on mcm7, promoting the unloading of the CMG helicase complex by the vcp/p97 ATPase.

The protein resides in the nucleus. The protein localises to the chromosome. The catalysed reaction is ATP + H2O = ADP + phosphate + H(+). Functionally, acts as a component of the mcm2-7 complex (mcm complex) which is the putative replicative helicase essential for 'once per cell cycle' DNA replication initiation and elongation in eukaryotic cells. The active ATPase sites in the mcm2-7 ring are formed through the interaction surfaces of two neighboring subunits such that a critical structure of a conserved arginine finger motif is provided in trans relative to the ATP-binding site of the Walker A box of the adjacent subunit. The six ATPase active sites, however, are likely to contribute differentially to the complex helicase activity. The existence of maternal and zygotic forms of mcm3 and mcm6 suggests that specific forms of mcm2-7 complexes may be used during different stages of development. In Xenopus laevis (African clawed frog), this protein is DNA replication licensing factor mcm7-B (mcm7-b).